A 343-amino-acid chain; its full sequence is MKEKILTFSSDPSSPVTRHETEEDTGDDLFSLRPCDFEDYVGQDRTVETLRIAIAAAKQRSEPLEHVLFHGPPGLGKTTLAHIIAAEMGTSLTITSGPALEKGGDLIGMLTHLKRGDILFVDEIHRLPRTTEEFLYPAMEDFAVDFVFDKGIHARCHRYRLNQFVLVGATTRVGLLSAPLRDRFGIFRKFDFYSRQDLARIVSRSAALMGLTIDETCTMELARRSRGTPRIVNRLLKRVRDYVQVRHGGVITVSAIDDALALEGVDEKGLTGLDRSYLETIIQYYGGGPVGIEAIGATLQEETDTLVDVVEPFLLAEGLLQRTSSGRKATEAAYRHLGVQWRG.

Residues methionine 1–glycine 26 are disordered. A large ATPase domain (RuvB-L) region spans residues glutamate 3–tyrosine 193. Positions threonine 7 to valine 16 are enriched in polar residues. Residues leucine 32, arginine 33, glycine 74, lysine 77, threonine 78, threonine 79, glutamate 140–phenylalanine 142, arginine 183, tyrosine 193, and arginine 230 contribute to the ATP site. Threonine 78 lines the Mg(2+) pocket. The small ATPAse domain (RuvB-S) stretch occupies residues serine 194–glycine 264. The interval glutamate 267–glycine 343 is head domain (RuvB-H). 2 residues coordinate DNA: arginine 322 and arginine 327.

Belongs to the RuvB family. In terms of assembly, homohexamer. Forms an RuvA(8)-RuvB(12)-Holliday junction (HJ) complex. HJ DNA is sandwiched between 2 RuvA tetramers; dsDNA enters through RuvA and exits via RuvB. An RuvB hexamer assembles on each DNA strand where it exits the tetramer. Each RuvB hexamer is contacted by two RuvA subunits (via domain III) on 2 adjacent RuvB subunits; this complex drives branch migration. In the full resolvosome a probable DNA-RuvA(4)-RuvB(12)-RuvC(2) complex forms which resolves the HJ.

The protein resides in the cytoplasm. The catalysed reaction is ATP + H2O = ADP + phosphate + H(+). Its function is as follows. The RuvA-RuvB-RuvC complex processes Holliday junction (HJ) DNA during genetic recombination and DNA repair, while the RuvA-RuvB complex plays an important role in the rescue of blocked DNA replication forks via replication fork reversal (RFR). RuvA specifically binds to HJ cruciform DNA, conferring on it an open structure. The RuvB hexamer acts as an ATP-dependent pump, pulling dsDNA into and through the RuvAB complex. RuvB forms 2 homohexamers on either side of HJ DNA bound by 1 or 2 RuvA tetramers; 4 subunits per hexamer contact DNA at a time. Coordinated motions by a converter formed by DNA-disengaged RuvB subunits stimulates ATP hydrolysis and nucleotide exchange. Immobilization of the converter enables RuvB to convert the ATP-contained energy into a lever motion, pulling 2 nucleotides of DNA out of the RuvA tetramer per ATP hydrolyzed, thus driving DNA branch migration. The RuvB motors rotate together with the DNA substrate, which together with the progressing nucleotide cycle form the mechanistic basis for DNA recombination by continuous HJ branch migration. Branch migration allows RuvC to scan DNA until it finds its consensus sequence, where it cleaves and resolves cruciform DNA. The protein is Holliday junction branch migration complex subunit RuvB of Desulfosudis oleivorans (strain DSM 6200 / JCM 39069 / Hxd3) (Desulfococcus oleovorans).